The following is a 357-amino-acid chain: Peptide chain release factor 1 (357 aa).

Gln234 bears the N5-methylglutamine mark. The segment covering 284 to 307 (KKQEQRSNDRKQQVGSGDRSERIR) has biased composition (basic and acidic residues). The segment at 284–313 (KKQEQRSNDRKQQVGSGDRSERIRTYNFPQ) is disordered.

This sequence belongs to the prokaryotic/mitochondrial release factor family. Post-translationally, methylated by PrmC. Methylation increases the termination efficiency of RF1.

Its subcellular location is the cytoplasm. Peptide chain release factor 1 directs the termination of translation in response to the peptide chain termination codons UAG and UAA. The chain is Peptide chain release factor 1 from Borrelia hermsii (strain HS1 / DAH).